Consider the following 470-residue polypeptide: 3-isopropylmalate dehydratase large subunit (470 aa).

3 residues coordinate [4Fe-4S] cluster: Cys351, Cys411, and Cys414.

It belongs to the aconitase/IPM isomerase family. LeuC type 1 subfamily. As to quaternary structure, heterodimer of LeuC and LeuD. [4Fe-4S] cluster is required as a cofactor.

The enzyme catalyses (2R,3S)-3-isopropylmalate = (2S)-2-isopropylmalate. The protein operates within amino-acid biosynthesis; L-leucine biosynthesis; L-leucine from 3-methyl-2-oxobutanoate: step 2/4. Catalyzes the isomerization between 2-isopropylmalate and 3-isopropylmalate, via the formation of 2-isopropylmaleate. This chain is 3-isopropylmalate dehydratase large subunit, found in Rhodopseudomonas palustris (strain BisA53).